The following is a 186-amino-acid chain: Transcriptional repressor NrdR (186 aa).

The disordered stretch occupies residues 1–24 (MRCPYCGGLDTQVKDSRPSDDASA). Residues 3–34 (CPYCGGLDTQVKDSRPSDDASAIRRRRICPDC) fold into a zinc finger. Residues 12-24 (QVKDSRPSDDASA) show a composition bias toward basic and acidic residues. Residues 49-139 (LTVVKRSGRR…VYKNFREARD (91 aa)) enclose the ATP-cone domain. The interval 146 to 186 (RLNGAGRPGGEPEPPDEAAPGPAAAPGEGGEAPARRARSRA) is disordered.

Belongs to the NrdR family. Zn(2+) serves as cofactor.

Its function is as follows. Negatively regulates transcription of bacterial ribonucleotide reductase nrd genes and operons by binding to NrdR-boxes. This is Transcriptional repressor NrdR from Methylobacterium sp. (strain 4-46).